The chain runs to 466 residues: Arginine biosynthesis bifunctional protein ArgJ, mitochondrial (466 aa).

Residues 1-9 constitute a mitochondrion transit peptide; that stretch reads MSSLVLKRF. Substrate contacts are provided by T183, K209, T232, E320, N461, and S466. Catalysis depends on T232, which acts as the Nucleophile.

The protein belongs to the ArgJ family. In terms of assembly, heterodimer of an alpha and a beta chain. The alpha and beta chains are autoproteolytically processed from a single precursor protein within the mitochondrion.

It is found in the mitochondrion matrix. It catalyses the reaction N(2)-acetyl-L-ornithine + L-glutamate = N-acetyl-L-glutamate + L-ornithine. The enzyme catalyses L-glutamate + acetyl-CoA = N-acetyl-L-glutamate + CoA + H(+). It functions in the pathway amino-acid biosynthesis; L-arginine biosynthesis; L-ornithine and N-acetyl-L-glutamate from L-glutamate and N(2)-acetyl-L-ornithine (cyclic): step 1/1. Its pathway is amino-acid biosynthesis; L-arginine biosynthesis; N(2)-acetyl-L-ornithine from L-glutamate: step 1/4. Functionally, catalyzes two activities which are involved in the cyclic version of arginine biosynthesis: the synthesis of acetylglutamate from glutamate and acetyl-CoA, and of ornithine by transacetylation between acetylornithine and glutamate. The polypeptide is Arginine biosynthesis bifunctional protein ArgJ, mitochondrial (Laccaria bicolor (strain S238N-H82 / ATCC MYA-4686) (Bicoloured deceiver)).